We begin with the raw amino-acid sequence, 372 residues long: MSYYQIIVCILASISYIILLEVIALDLGVLDNIFIPKRFAASTDVAIQLPDRNVTLWSRQAVFGKHFTNASATTVINLYLPSNFQEDMSGCPNRNDTDASYFYENDIIDYDIEYIEQKSYSSKPSARVQKDDGGESKDEAILDFLLVQRGKCTYFDKALEAQRLGFKGVIVGDNRSPSSFRLHYMVAPDKVDESKVHIPSLFVSTSSYNLLWSDLLHSYRQPLKLYAKPEELGDMFWPFLLCFSPSIIMLITVQALAIRKFIRTYRTKSKTRRFIEDLPSRTISREGFYSEEEEIENSTQNGELVPLMDESTRRATFGVECVICLESFTKGDKVVALPCKHEFHRPCIAKWIVDYRHACPTCNTEVPPPKPF.

The N-terminal stretch at 1–24 (MSYYQIIVCILASISYIILLEVIA) is a signal peptide. The 124-residue stretch at 92–215 (PNRNDTDASY…SSYNLLWSDL (124 aa)) folds into the PA domain. A helical transmembrane segment spans residues 236–256 (FWPFLLCFSPSIIMLITVQAL). Residue Ser-280 is modified to Phosphoserine. An RING-type; atypical zinc finger spans residues 321-363 (CVICLESFTKGDKVVALPCKHEFHRPCIAKWIVDYRHACPTCN).

It localises to the golgi apparatus membrane. The protein localises to the vacuole membrane. This is an uncharacterized protein from Schizosaccharomyces pombe (strain 972 / ATCC 24843) (Fission yeast).